Here is a 157-residue protein sequence, read N- to C-terminus: Eukaryotic translation initiation factor 5A-1 (157 aa).

Lys-52 bears the Hypusine mark. Phosphoserine is present on residues Ser-75 and Ser-77. Thr-78 bears the Phosphothreonine mark.

The protein belongs to the eIF-5A family. Post-translationally, lys-52 undergoes hypusination, a unique post-translational modification that consists in the addition of a butylamino group from spermidine to lysine side chain, leading to the formation of the unusual amino acid hypusine. eIF-5As are the only known proteins to undergo this modification, which is essential for their function.

The protein resides in the cytoplasm. Translation factor that promotes translation elongation and termination, particularly upon ribosome stalling at specific amino acid sequence contexts. Binds between the exit (E) and peptidyl (P) site of the ribosome and promotes rescue of stalled ribosome: specifically required for efficient translation of polyproline-containing peptides as well as other motifs that stall the ribosome. Acts as a ribosome quality control (RQC) cofactor by joining the RQC complex to facilitate peptidyl transfer during CAT tailing step. The polypeptide is Eukaryotic translation initiation factor 5A-1 (tif51a) (Schizosaccharomyces pombe (strain 972 / ATCC 24843) (Fission yeast)).